The following is a 1368-amino-acid chain: DNA-directed RNA polymerase subunit beta (1368 aa).

It belongs to the RNA polymerase beta chain family. The RNAP catalytic core consists of 2 alpha, 1 beta, 1 beta' and 1 omega subunit. When a sigma factor is associated with the core the holoenzyme is formed, which can initiate transcription.

The enzyme catalyses RNA(n) + a ribonucleoside 5'-triphosphate = RNA(n+1) + diphosphate. Its function is as follows. DNA-dependent RNA polymerase catalyzes the transcription of DNA into RNA using the four ribonucleoside triphosphates as substrates. This Burkholderia cenocepacia (strain HI2424) protein is DNA-directed RNA polymerase subunit beta.